The chain runs to 158 residues: NAD(P)H-quinone oxidoreductase subunit J, chloroplastic (158 aa).

The protein belongs to the complex I 30 kDa subunit family. NDH is composed of at least 16 different subunits, 5 of which are encoded in the nucleus.

The protein resides in the plastid. Its subcellular location is the chloroplast thylakoid membrane. It carries out the reaction a plastoquinone + NADH + (n+1) H(+)(in) = a plastoquinol + NAD(+) + n H(+)(out). The catalysed reaction is a plastoquinone + NADPH + (n+1) H(+)(in) = a plastoquinol + NADP(+) + n H(+)(out). NDH shuttles electrons from NAD(P)H:plastoquinone, via FMN and iron-sulfur (Fe-S) centers, to quinones in the photosynthetic chain and possibly in a chloroplast respiratory chain. The immediate electron acceptor for the enzyme in this species is believed to be plastoquinone. Couples the redox reaction to proton translocation, and thus conserves the redox energy in a proton gradient. In Cicer arietinum (Chickpea), this protein is NAD(P)H-quinone oxidoreductase subunit J, chloroplastic.